Here is a 950-residue protein sequence, read N- to C-terminus: 2-oxoglutarate dehydrogenase E1 component (950 aa).

This sequence belongs to the alpha-ketoglutarate dehydrogenase family. Homodimer. Part of the 2-oxoglutarate dehydrogenase (OGDH) complex composed of E1 (2-oxoglutarate dehydrogenase), E2 (dihydrolipoamide succinyltransferase) and E3 (dihydrolipoamide dehydrogenase); the complex contains multiple copies of the three enzymatic components (E1, E2 and E3). Requires thiamine diphosphate as cofactor.

The catalysed reaction is N(6)-[(R)-lipoyl]-L-lysyl-[protein] + 2-oxoglutarate + H(+) = N(6)-[(R)-S(8)-succinyldihydrolipoyl]-L-lysyl-[protein] + CO2. Functionally, E1 component of the 2-oxoglutarate dehydrogenase (OGDH) complex which catalyzes the decarboxylation of 2-oxoglutarate, the first step in the conversion of 2-oxoglutarate to succinyl-CoA and CO(2). The polypeptide is 2-oxoglutarate dehydrogenase E1 component (Geobacillus kaustophilus (strain HTA426)).